A 150-amino-acid chain; its full sequence is D-aminoacyl-tRNA deacylase (150 aa).

Residues Gly137 to Pro138 carry the Gly-cisPro motif, important for rejection of L-amino acids motif.

The protein belongs to the DTD family. Homodimer.

It localises to the cytoplasm. It carries out the reaction glycyl-tRNA(Ala) + H2O = tRNA(Ala) + glycine + H(+). The catalysed reaction is a D-aminoacyl-tRNA + H2O = a tRNA + a D-alpha-amino acid + H(+). Functionally, an aminoacyl-tRNA editing enzyme that deacylates mischarged D-aminoacyl-tRNAs. Also deacylates mischarged glycyl-tRNA(Ala), protecting cells against glycine mischarging by AlaRS. Acts via tRNA-based rather than protein-based catalysis; rejects L-amino acids rather than detecting D-amino acids in the active site. By recycling D-aminoacyl-tRNA to D-amino acids and free tRNA molecules, this enzyme counteracts the toxicity associated with the formation of D-aminoacyl-tRNA entities in vivo and helps enforce protein L-homochirality. The polypeptide is D-aminoacyl-tRNA deacylase (Heliobacterium modesticaldum (strain ATCC 51547 / Ice1)).